The primary structure comprises 144 residues: Ribonuclease VapC1 (144 aa).

Positions 6–132 (VFVDGNVIVD…SFYSPDIEVL (127 aa)) constitute a PINc domain. Mg(2+) is bound by residues Asp9 and Asp102.

Belongs to the PINc/VapC protein family. Mg(2+) is required as a cofactor.

Its function is as follows. Toxic component of a type II toxin-antitoxin (TA) system. An RNase. The sequence is that of Ribonuclease VapC1 from Aquifex aeolicus (strain VF5).